The primary structure comprises 95 residues: UPF0235 protein Sama_2480 (95 aa).

It belongs to the UPF0235 family.

This chain is UPF0235 protein Sama_2480, found in Shewanella amazonensis (strain ATCC BAA-1098 / SB2B).